The sequence spans 189 residues: Potassium-transporting ATPase KdpC subunit (189 aa).

The helical transmembrane segment at 8–28 threads the bilayer; the sequence is LVMLILLTLITGIAYPLLTTG.

This sequence belongs to the KdpC family. As to quaternary structure, the system is composed of three essential subunits: KdpA, KdpB and KdpC.

The protein localises to the cell inner membrane. Its function is as follows. Part of the high-affinity ATP-driven potassium transport (or Kdp) system, which catalyzes the hydrolysis of ATP coupled with the electrogenic transport of potassium into the cytoplasm. This subunit acts as a catalytic chaperone that increases the ATP-binding affinity of the ATP-hydrolyzing subunit KdpB by the formation of a transient KdpB/KdpC/ATP ternary complex. The protein is Potassium-transporting ATPase KdpC subunit of Serratia proteamaculans (strain 568).